Reading from the N-terminus, the 251-residue chain is Cathelicidin-B1 (251 aa).

The N-terminal stretch at 1–20 (MGRMWASEVLLLLLLGSSRA) is a signal peptide. A propeptide spanning residues 21 to 211 (VTPGLDVSTA…ELRCRPLRPQ (191 aa)) is cleaved from the precursor. The disordered stretch occupies residues 29–109 (TAPGLDGSIP…TITPKQDGSI (81 aa)). 2 disulfide bridges follow: Cys172/Cys181 and Cys189/Cys205.

The protein belongs to the cathelicidin family. In terms of tissue distribution, detected in bursa of Fabricius, in filamentous structures surrounding the basal and lateral surfaces of bursal M cells (at protein level). Detected in bursa of Fabricius, in secretory enterocytes of the interfollicular bursal epithelium, but not in M cells.

The protein localises to the secreted. Functionally, has potent antimicrobial activity against Gram-positive and Gram-negative bacteria (in vitro). May play a role in the innate immune response. The chain is Cathelicidin-B1 (CATHB1) from Gallus gallus (Chicken).